A 303-amino-acid chain; its full sequence is Ribonucleoside-diphosphate reductase small subunit (303 aa).

Positions 60, 90, and 93 each coordinate Fe cation. Y97 is an active-site residue. The chain crosses the membrane as a helical span at residues 147–167; that stretch reads LLMILIEGIFFASSFASISYL. 3 residues coordinate Fe cation: E153, E187, and H190.

It belongs to the ribonucleoside diphosphate reductase small chain family. As to quaternary structure, heterotetramer composed of a homodimer of the large subunit (R1) and a homodimer of the small subunit (R2). Larger multisubunit protein complex are also active, composed of (R1)n(R2)n. It depends on Fe cation as a cofactor.

It localises to the host membrane. It carries out the reaction a 2'-deoxyribonucleoside 5'-diphosphate + [thioredoxin]-disulfide + H2O = a ribonucleoside 5'-diphosphate + [thioredoxin]-dithiol. In terms of biological role, ribonucleoside-diphosphate reductase holoenzyme provides the precursors necessary for viral DNA synthesis. Allows virus growth in non-dividing cells, as well as reactivation from latency in infected hosts. Catalyzes the biosynthesis of deoxyribonucleotides from the corresponding ribonucleotides. The sequence is that of Ribonucleoside-diphosphate reductase small subunit from Suid herpesvirus 1 (strain Kaplan) (SuHV-1).